A 196-amino-acid chain; its full sequence is RNA pyrophosphohydrolase (196 aa).

The region spanning 6–149 (GYRPNVGIVI…KRDVYRKVMK (144 aa)) is the Nudix hydrolase domain. The short motif at 38–59 (GGINDNESAEQAMYRELHEEVG) is the Nudix box element.

It belongs to the Nudix hydrolase family. RppH subfamily. The cofactor is a divalent metal cation.

Functionally, accelerates the degradation of transcripts by removing pyrophosphate from the 5'-end of triphosphorylated RNA, leading to a more labile monophosphorylated state that can stimulate subsequent ribonuclease cleavage. The polypeptide is RNA pyrophosphohydrolase (Haemophilus influenzae (strain PittEE)).